The sequence spans 571 residues: Quinone-dependent D-lactate dehydrogenase (571 aa).

An FAD-binding PCMH-type domain is found at glycine 44–arginine 273. FAD contacts are provided by residues alanine 78–glycine 82, glycine 86–serine 87, glycine 145, serine 152, glycine 162, and valine 263.

This sequence belongs to the quinone-dependent D-lactate dehydrogenase family. Requires FAD as cofactor.

It is found in the cell membrane. The catalysed reaction is (R)-lactate + a quinone = a quinol + pyruvate. Its function is as follows. Catalyzes the oxidation of D-lactate to pyruvate. Also has weak activity with L-lactate and DL-2-hydroxybutyrate. Electrons derived from D-lactate oxidation enter the electron transport chain. Essential for growth with D-lactate as sole carbon and energy source. This chain is Quinone-dependent D-lactate dehydrogenase, found in Corynebacterium glutamicum (strain ATCC 13032 / DSM 20300 / JCM 1318 / BCRC 11384 / CCUG 27702 / LMG 3730 / NBRC 12168 / NCIMB 10025 / NRRL B-2784 / 534).